The following is a 129-amino-acid chain: Sm-like protein LSM4 (129 aa).

Positions 2–75 (LPLSLLKTAQ…IKYLRVPDEV (74 aa)) constitute a Sm domain. A compositionally biased stretch (basic and acidic residues) spans 79–90 (VQEEKTRTDRKP). The disordered stretch occupies residues 79 to 129 (VQEEKTRTDRKPPGVGRGRGRGVDDGGARGRGRGTSMGKMGGNRGAGRGRG). The segment covering 111–129 (RGTSMGKMGGNRGAGRGRG) has biased composition (gly residues).

It belongs to the snRNP Sm proteins family. In terms of assembly, component of the heptameric LSM1-LSM7 complex that forms a seven-membered ring structure with a donut shape. The LSM subunits are arranged in the order LSM1, LSM2, LSM3, LSM6, LSM5, LSM7 and LSM4. LSM4 subunit interacts only with its two neighboring subunits, LSM1A or LSM1B and LSM7. Component of the heptameric LSM2-LSM8 complex that forms a seven-membered ring structure with a donut shape. The LSM subunits are arranged in the order LSM8, LSM2, LSM3, LSM6, LSM5, LSM7 and LSM4. LSM4 subunit interacts only with its two neighboring subunits, LSM8 and LSM7. Post-translationally, methylated by PMRT15/SKB1 in response to salt stress or abscisic acid (ABA) treatment. As to expression, expressed in roots, leaves, stems, flowers and siliques.

It localises to the cytoplasm. The protein resides in the nucleus. Its function is as follows. Component of LSM protein complexes, which are involved in RNA processing. Component of the cytoplasmic LSM1-LSM7 complex which is involved in mRNA degradation by promoting decapping and leading to accurate 5'-3' mRNA decay. The cytoplasmic LSM1-LSM7 complex regulates developmental gene expression by the decapping of specific development-related transcripts. Component of the nuclear LSM2-LSM8 complex which is involved splicing nuclear mRNAs. LSM2-LSM8 binds directly to the U6 small nuclear RNAs (snRNAs) and is essential for accurate splicing of selected development-related mRNAs through the stabilization of the spliceosomal U6 snRNA. Plays a critical role in the regulation of development-related gene expression. The chain is Sm-like protein LSM4 from Arabidopsis thaliana (Mouse-ear cress).